A 223-amino-acid chain; its full sequence is uncharacterized protein (223 aa).

The HTH tetR-type domain maps to E11–K71. A DNA-binding region (H-T-H motif) is located at residues S34–F53.

This is an uncharacterized protein from Bacillus subtilis (strain 168).